The chain runs to 464 residues: Trigger factor (464 aa).

Residues 169–256 (GDVAIVDYRG…MKELKAKELP (88 aa)) form the PPIase FKBP-type domain.

Belongs to the FKBP-type PPIase family. Tig subfamily.

It is found in the cytoplasm. The enzyme catalyses [protein]-peptidylproline (omega=180) = [protein]-peptidylproline (omega=0). In terms of biological role, involved in protein export. Acts as a chaperone by maintaining the newly synthesized protein in an open conformation. Functions as a peptidyl-prolyl cis-trans isomerase. The polypeptide is Trigger factor (Microcystis aeruginosa (strain NIES-843 / IAM M-2473)).